The following is a 513-amino-acid chain: Serine/threonine protein phosphatase 2A 55 kDa regulatory subunit B alpha isoform (513 aa).

N-acetylmethionine is present on methionine 1. 6 WD repeats span residues 36–75 (QEVD…NSSG), 112–153 (EIEE…IKKI), 232–270 (AHDY…QSFN), 281–321 (DLSE…LCDS), 340–378 (EIIA…GPVA), and 483–513 (DYTT…MYYA).

Belongs to the phosphatase 2A regulatory subunit B family. PP2A consists of a common heteromeric enzyme, composed of a catalytic subunit (subunits C), a constant regulatory subunit (subunit A), and a variety of regulatory subunits such as subunits B (the R2/B/PR55/B55, R3/B''/PR72/PR130/PR59 and R5/B'/B56 families). Interacts with SIC/RON3. As to expression, expressed ubiquitously.

Its function is as follows. The B regulatory subunit may modulate substrate selectivity and catalytic activity, and may also direct the localization of the catalytic enzyme to a particular subcellular compartment. In Arabidopsis thaliana (Mouse-ear cress), this protein is Serine/threonine protein phosphatase 2A 55 kDa regulatory subunit B alpha isoform (PP2AB1).